The following is a 271-amino-acid chain: Ribosomal RNA small subunit methyltransferase A (271 aa).

Residues N28, L30, G54, E75, D99, and N117 each coordinate S-adenosyl-L-methionine.

This sequence belongs to the class I-like SAM-binding methyltransferase superfamily. rRNA adenine N(6)-methyltransferase family. RsmA subfamily.

The protein resides in the cytoplasm. It catalyses the reaction adenosine(1518)/adenosine(1519) in 16S rRNA + 4 S-adenosyl-L-methionine = N(6)-dimethyladenosine(1518)/N(6)-dimethyladenosine(1519) in 16S rRNA + 4 S-adenosyl-L-homocysteine + 4 H(+). In terms of biological role, specifically dimethylates two adjacent adenosines (A1518 and A1519) in the loop of a conserved hairpin near the 3'-end of 16S rRNA in the 30S particle. May play a critical role in biogenesis of 30S subunits. This is Ribosomal RNA small subunit methyltransferase A from Thermus thermophilus (strain ATCC BAA-163 / DSM 7039 / HB27).